Consider the following 101-residue polypeptide: Large ribosomal subunit protein uL24 (101 aa).

It belongs to the universal ribosomal protein uL24 family. In terms of assembly, part of the 50S ribosomal subunit.

Functionally, one of two assembly initiator proteins, it binds directly to the 5'-end of the 23S rRNA, where it nucleates assembly of the 50S subunit. One of the proteins that surrounds the polypeptide exit tunnel on the outside of the subunit. This chain is Large ribosomal subunit protein uL24, found in Borrelia garinii subsp. bavariensis (strain ATCC BAA-2496 / DSM 23469 / PBi) (Borreliella bavariensis).